Reading from the N-terminus, the 311-residue chain is CID domain-containing protein 1 (311 aa).

The CID domain occupies 1 to 134; sequence MSDFTEQTLR…RLQEAHQQMK (134 aa). Positions 224 to 256 form a coiled coil; sequence MLEDYVKRLKEETKERESLETNLNMLIQNVRMS.

The polypeptide is CID domain-containing protein 1 (cids-1) (Caenorhabditis briggsae).